A 3515-amino-acid polypeptide reads, in one-letter code: Microtubule-actin cross-linking factor 1, isoforms 6/7 (3515 aa).

Disordered stretches follow at residues 1–23 (MGKPLSRPDCLRRNPSCLGKGEE), 108–136 (VQKSAPVPPRRRPNAERKDNVNRRSWKSF), 155–196 (VSEA…TLEH), 965–1178 (TEED…AVPT), 1217–1298 (SPAA…SPAA), 1710–1730 (EELATSGGQSPTGEQIPQFQQ), and 3078–3108 (PTHAPFIEKSRSGGRKSLSQPTPPPMPILSQ). Basic and acidic residues predominate over residues 120 to 129 (PNAERKDNVN). Positions 157–245 (EAGASNPSLQ…ESEAVATSGN (89 aa)) are 13 X 13 AA approximate tandem repeat of P-T-S-P-A-A-A-V-P-T-P-E-E. 2 stretches are compositionally biased toward low complexity: residues 995–1031 (STPEEPASPAAAVPTPEEPTSPAAAVPTPEEPTSPAA) and 1040–1139 (TSPA…AVPT). 13 repeat units span residues 1012 to 1024 (EPTSPAAAVPTPE), 1026 to 1037 (PTSPAAAVPPPE), 1038 to 1051 (EPTSPAAAVPTPEE), 1052 to 1064 (PTSPAAAVPTPEE), 1065 to 1077 (PTSPAAAVPTPEE), 1078 to 1090 (PTSPAAAVPTPEE), 1091 to 1103 (PTSPAAAVPTPEE), 1104 to 1116 (PTSPAAAVPTPEE), 1117 to 1129 (PASPAAAVPTPEE), 1130 to 1142 (PASPAAAVPTPEE), 1143 to 1155 (PAFPAPAVPTPEE), 1156 to 1168 (SASAAVAVPTPEE), and 1169 to 1178 (SASPAAAVPT). The span at 1140–1151 (PEEPAFPAPAVP) shows a compositional bias: pro residues. Composition is skewed to low complexity over residues 1162 to 1178 (AVPTPEESASPAAAVPT) and 1268 to 1298 (SSPAASVPTPEEPASPAAAVSNLEEPASPAA). The segment covering 1715–1730 (SGGQSPTGEQIPQFQQ) has biased composition (polar residues). 2 consecutive EF-hand domains span residues 3168–3203 (HKKSRVMDFFRRIDKDQDGKITRQEFIDGILASKFP) and 3204–3239 (TTKLEMTAVADIFDRDGDGYIDYYEFVAALHPNKDA). Residues Asp-3181, Asp-3183, Asp-3185, Lys-3187, Glu-3192, Asp-3217, Asp-3219, Asp-3221, Tyr-3223, and Glu-3228 each contribute to the Ca(2+) site. A GAR domain is found at 3244-3316 (TDADKIEDEV…EFLVKNDPCR (73 aa)). Residues 3332-3515 (PEGASQGMTP…ASPRTPGPKR (184 aa)) are disordered. Positions 3352-3386 (SSRAASPTRSSSSASQSNHSCTSMPSSPATPASGT) are enriched in low complexity. A compositionally biased stretch (polar residues) spans 3402-3426 (TFHSSRTSLAGDTSNSSSPASTGAK). Over residues 3437-3451 (SRPGSRAGSRAGSRA) the composition is skewed to low complexity. Polar residues predominate over residues 3466–3488 (ETQSACSDTSESSAAGGQGNSRR).

It is found in the cytoplasm. Its subcellular location is the cytoskeleton. The polypeptide is Microtubule-actin cross-linking factor 1, isoforms 6/7 (Homo sapiens (Human)).